Reading from the N-terminus, the 383-residue chain is S-adenosylmethionine synthase (383 aa).

An ATP-binding site is contributed by His15. Asp17 provides a ligand contact to Mg(2+). A K(+)-binding site is contributed by Glu43. L-methionine-binding residues include Glu56 and Gln99. The interval 99-109 (QSPDINQGVDR) is flexible loop. ATP is bound by residues 164 to 166 (DAK), 230 to 231 (RF), Asp239, 245 to 246 (RK), Ala262, and Lys266. Asp239 contacts L-methionine. Lys270 is a binding site for L-methionine.

The protein belongs to the AdoMet synthase family. Homotetramer; dimer of dimers. Mg(2+) serves as cofactor. It depends on K(+) as a cofactor.

Its subcellular location is the cytoplasm. The enzyme catalyses L-methionine + ATP + H2O = S-adenosyl-L-methionine + phosphate + diphosphate. Its pathway is amino-acid biosynthesis; S-adenosyl-L-methionine biosynthesis; S-adenosyl-L-methionine from L-methionine: step 1/1. In terms of biological role, catalyzes the formation of S-adenosylmethionine (AdoMet) from methionine and ATP. The overall synthetic reaction is composed of two sequential steps, AdoMet formation and the subsequent tripolyphosphate hydrolysis which occurs prior to release of AdoMet from the enzyme. This Shewanella oneidensis (strain ATCC 700550 / JCM 31522 / CIP 106686 / LMG 19005 / NCIMB 14063 / MR-1) protein is S-adenosylmethionine synthase.